Here is a 105-residue protein sequence, read N- to C-terminus: Large ribosomal subunit protein uL24 (105 aa).

The disordered stretch occupies residues 67–105; the sequence is HISNLNPVDPKTGKATRIGRRKSSEGTLVRYSKKSGEEI.

The protein belongs to the universal ribosomal protein uL24 family. As to quaternary structure, part of the 50S ribosomal subunit.

In terms of biological role, one of two assembly initiator proteins, it binds directly to the 5'-end of the 23S rRNA, where it nucleates assembly of the 50S subunit. Functionally, one of the proteins that surrounds the polypeptide exit tunnel on the outside of the subunit. This is Large ribosomal subunit protein uL24 from Bacteroides thetaiotaomicron (strain ATCC 29148 / DSM 2079 / JCM 5827 / CCUG 10774 / NCTC 10582 / VPI-5482 / E50).